Here is a 379-residue protein sequence, read N- to C-terminus: Bifunctional riboflavin kinase/FMN phosphatase (379 aa).

Serine 2 is subject to N-acetylserine. The active-site Nucleophile; for FMN phosphatase activity is the aspartate 17. The Mg(2+) site is built by aspartate 17 and aspartate 19. Aspartate 19 functions as the Proton donor; for FMN phosphatase activity in the catalytic mechanism. ATP is bound by residues glycine 248, lysine 254, threonine 260, and asparagine 262. Threonine 260 contributes to the Mg(2+) binding site. Glutamate 312 functions as the Nucleophile; for riboflavin kinase activity in the catalytic mechanism. The ATP site is built by leucine 315, histidine 317, and tyrosine 324. Positions 337 and 342 each coordinate FMN.

It in the N-terminal section; belongs to the HAD-like hydrolase superfamily. CbbY/CbbZ/Gph/YieH family. The protein in the C-terminal section; belongs to the flavokinase family. In terms of assembly, monomer. Mg(2+) serves as cofactor.

It carries out the reaction riboflavin + ATP = FMN + ADP + H(+). The catalysed reaction is FMN + H2O = riboflavin + phosphate. It functions in the pathway cofactor biosynthesis; FMN biosynthesis; FMN from riboflavin (ATP route): step 1/1. Functionally, bifunctional enzyme that catalyzes the hydrolysis of flavin-mononucleotide (FMN) to riboflavin (vitamin B2) and the phosphorylation of riboflavin to form (FMN) coenzyme. The polypeptide is Bifunctional riboflavin kinase/FMN phosphatase (Arabidopsis thaliana (Mouse-ear cress)).